We begin with the raw amino-acid sequence, 199 residues long: MNYKDIINACILSGVFLLHSPSALADTPSVGVSKGQESLQPAAEGNLWQRLIRNVSLAWNSPHQELYIPVNTWHNRWTYDDEKIASYNERPWGVGYGKYRYDEDNNWHSVYAMAFMDSHNRVEPILGYGYQKMWIPGEREGWRFGAGFTASITARYEYHYIPLPLPLPLISIEYNRLSLQTTYIPGTYNNGNVLFTWIR.

The first 25 residues, 1 to 25 (MNYKDIINACILSGVFLLHSPSALA), serve as a signal peptide directing secretion. Active-site residues include histidine 74, aspartate 117, and serine 118.

This sequence belongs to the lipid A palmitoyltransferase family. As to quaternary structure, homodimer.

The protein resides in the cell outer membrane. The enzyme catalyses a lipid A + a 1,2-diacyl-sn-glycero-3-phosphocholine = a hepta-acyl lipid A + a 2-acyl-sn-glycero-3-phosphocholine. The catalysed reaction is a lipid IVA + a 1,2-diacyl-sn-glycero-3-phosphocholine = a lipid IVB + a 2-acyl-sn-glycero-3-phosphocholine. It catalyses the reaction a lipid IIA + a 1,2-diacyl-sn-glycero-3-phosphocholine = a lipid IIB + a 2-acyl-sn-glycero-3-phosphocholine. Transfers a fatty acid residue from the sn-1 position of a phospholipid to the N-linked hydroxyfatty acid chain on the proximal unit of lipid A or its precursors. The chain is Lipid A acyltransferase PagP from Yersinia pestis bv. Antiqua (strain Antiqua).